The primary structure comprises 360 residues: Photosystem II protein D1 (360 aa).

A run of 3 helical transmembrane segments spans residues 32-49, 121-136, and 145-159; these read YLGW…SATF, HFFI…EWEL, and WIFV…AASA. H121 contacts chlorophyll a. Y129 serves as a coordination point for pheophytin a. 2 residues coordinate [CaMn4O5] cluster: D173 and E192. Residues 200-221 form a helical membrane-spanning segment; sequence LHMFGVAAVFGGSLFSAMHGSL. H201 is a chlorophyll a binding site. A quinone contacts are provided by residues H218 and 267-268; that span reads SF. H218 serves as a coordination point for Fe cation. Residue H275 participates in Fe cation binding. Residues 277–291 traverse the membrane as a helical segment; that stretch reads FLGAWPVVGIWLTAM. H335, E336, D345, and A347 together coordinate [CaMn4O5] cluster. The propeptide occupies 348 to 360; the sequence is CANCLLSLWPMVG.

It belongs to the reaction center PufL/M/PsbA/D family. PSII is composed of 1 copy each of membrane proteins PsbA, PsbB, PsbC, PsbD, PsbE, PsbF, PsbH, PsbI, PsbJ, PsbK, PsbL, PsbM, PsbT, PsbX, PsbY, PsbZ, Psb30/Ycf12, at least 3 peripheral proteins of the oxygen-evolving complex and a large number of cofactors. It forms dimeric complexes. The D1/D2 heterodimer binds P680, chlorophylls that are the primary electron donor of PSII, and subsequent electron acceptors. It shares a non-heme iron and each subunit binds pheophytin, quinone, additional chlorophylls, carotenoids and lipids. D1 provides most of the ligands for the Mn4-Ca-O5 cluster of the oxygen-evolving complex (OEC). There is also a Cl(-1) ion associated with D1 and D2, which is required for oxygen evolution. The PSII complex binds additional chlorophylls, carotenoids and specific lipids. is required as a cofactor. Tyr-164 forms a radical intermediate that is referred to as redox-active TyrZ, YZ or Y-Z. Post-translationally, C-terminally processed by CtpA; processing is essential to allow assembly of the oxygen-evolving complex and thus photosynthetic growth.

It localises to the plastid. The protein localises to the chloroplast thylakoid membrane. It carries out the reaction 2 a plastoquinone + 4 hnu + 2 H2O = 2 a plastoquinol + O2. In terms of biological role, photosystem II (PSII) is a light-driven water:plastoquinone oxidoreductase that uses light energy to abstract electrons from H(2)O, generating O(2) and a proton gradient subsequently used for ATP formation. It consists of a core antenna complex that captures photons, and an electron transfer chain that converts photonic excitation into a charge separation. The D1/D2 (PsbA/PsbD) reaction center heterodimer binds P680, the primary electron donor of PSII as well as several subsequent electron acceptors. The chain is Photosystem II protein D1 from Karenia mikimotoi (Red tide dinoflagellate).